The following is a 273-amino-acid chain: Putative pyruvate, phosphate dikinase regulatory protein (273 aa).

153 to 160 (GISRTSKT) provides a ligand contact to ADP.

Belongs to the pyruvate, phosphate/water dikinase regulatory protein family. PDRP subfamily.

The catalysed reaction is N(tele)-phospho-L-histidyl/L-threonyl-[pyruvate, phosphate dikinase] + ADP = N(tele)-phospho-L-histidyl/O-phospho-L-threonyl-[pyruvate, phosphate dikinase] + AMP + H(+). It catalyses the reaction N(tele)-phospho-L-histidyl/O-phospho-L-threonyl-[pyruvate, phosphate dikinase] + phosphate + H(+) = N(tele)-phospho-L-histidyl/L-threonyl-[pyruvate, phosphate dikinase] + diphosphate. Functionally, bifunctional serine/threonine kinase and phosphorylase involved in the regulation of the pyruvate, phosphate dikinase (PPDK) by catalyzing its phosphorylation/dephosphorylation. The protein is Putative pyruvate, phosphate dikinase regulatory protein of Rhizobium etli (strain CIAT 652).